We begin with the raw amino-acid sequence, 352 residues long: Replication factor C subunit 5 (352 aa).

Belongs to the activator 1 small subunits family. As to quaternary structure, heteropentamer of subunits rfc1, rfc2, rfc3, rfc4 and rfc5 that forms a complex with PCNA in the presence of ATP.

Its subcellular location is the nucleus. In terms of biological role, the elongation of primed DNA templates by DNA polymerase delta and epsilon requires the action of the accessory proteins proliferating cell nuclear antigen (PCNA) and activator 1. This is Replication factor C subunit 5 from Neurospora crassa (strain ATCC 24698 / 74-OR23-1A / CBS 708.71 / DSM 1257 / FGSC 987).